Reading from the N-terminus, the 658-residue chain is Protein translocase subunit SecA 3 (658 aa).

Residues Q111, 129 to 133, and D536 contribute to the ATP site; that span reads GEGKT.

The protein belongs to the SecA family. Monomer and homodimer. Part of the essential Sec protein translocation apparatus which comprises SecA, SecYEG and auxiliary proteins SecDF-YajC and YidC.

The protein localises to the cell inner membrane. It localises to the cytoplasm. It carries out the reaction ATP + H2O + cellular proteinSide 1 = ADP + phosphate + cellular proteinSide 2.. In terms of biological role, part of the Sec protein translocase complex. Interacts with the SecYEG preprotein conducting channel. Has a central role in coupling the hydrolysis of ATP to the transfer of proteins into and across the cell membrane, serving both as a receptor for the preprotein-SecB complex and as an ATP-driven molecular motor driving the stepwise translocation of polypeptide chains across the membrane. This chain is Protein translocase subunit SecA 3, found in Magnetococcus marinus (strain ATCC BAA-1437 / JCM 17883 / MC-1).